A 404-amino-acid polypeptide reads, in one-letter code: UBP1-associated protein 2C (404 aa).

Positions 1 to 29 are disordered; the sequence is MDMMKKRKLDENGNGLNTNGGGTIGPTRL. 2 consecutive RRM domains span residues 75–152 and 167–248; these read RKLF…LAAS and RKIY…GKKG. 2 disordered regions span residues 246–270 and 344–404; these read KKGGKPGMPQAQDGGSGHGHVHGEG and GSGQ…PPNY.

In terms of tissue distribution, expressed in root apical and lateral meristems, young leaves and embryos.

The protein localises to the nucleus. In terms of biological role, heterogeneous nuclear ribonucleoprotein (hnRNP)-like protein that acts as a component of a complex regulating the turnover of mRNAs in the nucleus. Binds with high affinity to RNA molecules that contain U-rich sequences in 3'-UTRs. May function in complex with UBP1 and contribute to the stabilization of mRNAs in the nucleus. The polypeptide is UBP1-associated protein 2C (UBA2C) (Arabidopsis thaliana (Mouse-ear cress)).